We begin with the raw amino-acid sequence, 244 residues long: Phosphoadenosine 5'-phosphosulfate reductase (244 aa).

The active-site Nucleophile; cysteine thiosulfonate intermediate is the Cys239.

It belongs to the PAPS reductase family. CysH subfamily.

It localises to the cytoplasm. It catalyses the reaction [thioredoxin]-disulfide + sulfite + adenosine 3',5'-bisphosphate + 2 H(+) = [thioredoxin]-dithiol + 3'-phosphoadenylyl sulfate. Its pathway is sulfur metabolism; hydrogen sulfide biosynthesis; sulfite from sulfate: step 3/3. Its function is as follows. Catalyzes the formation of sulfite from phosphoadenosine 5'-phosphosulfate (PAPS) using thioredoxin as an electron donor. The chain is Phosphoadenosine 5'-phosphosulfate reductase from Zymomonas mobilis subsp. mobilis (strain ATCC 31821 / ZM4 / CP4).